A 105-amino-acid chain; its full sequence is ATP-dependent Clp protease adapter protein ClpS (105 aa).

It belongs to the ClpS family. Binds to the N-terminal domain of the chaperone ClpA.

Its function is as follows. Involved in the modulation of the specificity of the ClpAP-mediated ATP-dependent protein degradation. This Prochlorococcus marinus (strain MIT 9515) protein is ATP-dependent Clp protease adapter protein ClpS.